Here is a 244-residue protein sequence, read N- to C-terminus: ATP synthase subunit b 2 (244 aa).

Residues 2–22 form a helical membrane-spanning segment; it reads TVDWWTIGLQVINVSVLIWLL.

This sequence belongs to the ATPase B chain family. In terms of assembly, F-type ATPases have 2 components, F(1) - the catalytic core - and F(0) - the membrane proton channel. F(1) has five subunits: alpha(3), beta(3), gamma(1), delta(1), epsilon(1). F(0) has three main subunits: a(1), b(2) and c(10-14). The alpha and beta chains form an alternating ring which encloses part of the gamma chain. F(1) is attached to F(0) by a central stalk formed by the gamma and epsilon chains, while a peripheral stalk is formed by the delta and b chains.

Its subcellular location is the cell inner membrane. Functionally, f(1)F(0) ATP synthase produces ATP from ADP in the presence of a proton or sodium gradient. F-type ATPases consist of two structural domains, F(1) containing the extramembraneous catalytic core and F(0) containing the membrane proton channel, linked together by a central stalk and a peripheral stalk. During catalysis, ATP synthesis in the catalytic domain of F(1) is coupled via a rotary mechanism of the central stalk subunits to proton translocation. In terms of biological role, component of the F(0) channel, it forms part of the peripheral stalk, linking F(1) to F(0). The polypeptide is ATP synthase subunit b 2 (Gluconobacter oxydans (strain 621H) (Gluconobacter suboxydans)).